A 118-amino-acid chain; its full sequence is Vacuolar ATPase assembly integral membrane protein vma-21 (118 aa).

Topologically, residues 1 to 35 are cytoplasmic; it reads MATRRIISQEKTLLEKDDRIGSSPAASEKSNITPA. A helical membrane pass occupies residues 36 to 56; that stretch reads VPASVIIKLLAFTFAMIVIPI. The Lumenal segment spans residues 57–73; sequence SSYFLTVDRLFKGNSTY. Residues 74 to 94 traverse the membrane as a helical segment; sequence AGATAAIMANVVLIGYIIVAM. Residues 95–118 are Cytoplasmic-facing; that stretch reads AEDQSDQENEKKGGGGKGEGKKDL. Residues 98-118 form a disordered region; the sequence is QSDQENEKKGGGGKGEGKKDL. A compositionally biased stretch (basic and acidic residues) spans 102–118; the sequence is ENEKKGGGGKGEGKKDL. A Prevents secretion from ER motif is present at residues 115–118; the sequence is KKDL.

It belongs to the VMA21 family.

Its subcellular location is the endoplasmic reticulum membrane. The protein localises to the endoplasmic reticulum-Golgi intermediate compartment membrane. It is found in the cytoplasmic vesicle. It localises to the COPII-coated vesicle membrane. Its function is as follows. Required for the assembly of the V0 complex of the vacuolar ATPase (V-ATPase) in the endoplasmic reticulum. This is Vacuolar ATPase assembly integral membrane protein vma-21 (vma-21) from Neurospora crassa (strain ATCC 24698 / 74-OR23-1A / CBS 708.71 / DSM 1257 / FGSC 987).